A 391-amino-acid chain; its full sequence is Phosphopentomutase (391 aa).

A Mn(2+)-binding site is contributed by aspartate 14. A disordered region spans residues 61–88 (IQGVPPDPAPTAFHGRMAERSEGKDTTT). Residues 76-87 (RMAERSEGKDTT) are compositionally biased toward basic and acidic residues. Mn(2+) is bound by residues aspartate 286, histidine 291, aspartate 327, histidine 328, and histidine 339.

This sequence belongs to the phosphopentomutase family. The cofactor is Mn(2+).

Its subcellular location is the cytoplasm. It carries out the reaction 2-deoxy-alpha-D-ribose 1-phosphate = 2-deoxy-D-ribose 5-phosphate. The catalysed reaction is alpha-D-ribose 1-phosphate = D-ribose 5-phosphate. Its pathway is carbohydrate degradation; 2-deoxy-D-ribose 1-phosphate degradation; D-glyceraldehyde 3-phosphate and acetaldehyde from 2-deoxy-alpha-D-ribose 1-phosphate: step 1/2. Its function is as follows. Isomerase that catalyzes the conversion of deoxy-ribose 1-phosphate (dRib-1-P) and ribose 1-phosphate (Rib-1-P) to deoxy-ribose 5-phosphate (dRib-5-P) and ribose 5-phosphate (Rib-5-P), respectively. The chain is Phosphopentomutase from Anaeromyxobacter dehalogenans (strain 2CP-C).